A 303-amino-acid polypeptide reads, in one-letter code: MEDYVKIEKIGEGTYGVVYKGRHKSTGQVVAMKKIRLESEEEGVPSTAVREVSLLQELKHPNVVRLLDVLMQESRLYLIFEFLSMDLKKYLDSIPSGQYMDPMLVKSYLYQILEGIYFCHRRRVLHRDLKPQNLLIDNKGVIKLADFGLARAFGVPVRVYTHEVVTLWYRAPEVLLGSPRYSTPVDVWSTGTIFAELATKKPLFHGDSEIDQLFRIFRTLGTPNNDVWPDVESLPDYKNTFPKWKEGSLSSMVKNLDKNGLDLLAKMLIYNPPKRISAREAMTHPYFDDLDKSTLPAACINGV.

In terms of domain architecture, Protein kinase spans Tyr4–Phe287. Residues Ile10–Val18 and Lys33 each bind ATP. Thr14 carries the post-translational modification Phosphothreonine. Phosphotyrosine; by wee1 and wee2 is present on Tyr15. Asp128 (proton acceptor) is an active-site residue. Thr161 bears the Phosphothreonine; by cak mark.

It belongs to the protein kinase superfamily. CMGC Ser/Thr protein kinase family. CDC2/CDKX subfamily. As to quaternary structure, forms a stable but non-covalent complex with cyclin B in mature oocytes. In terms of processing, phosphorylation at Tyr-15 by wee1 and wee2 inhibits the protein kinase activity and acts negative regulator of entry into mitosis (G2 to M transition).

The protein resides in the nucleus. The protein localises to the cytoplasm. It localises to the cytoskeleton. It is found in the microtubule organizing center. Its subcellular location is the centrosome. The catalysed reaction is L-seryl-[protein] + ATP = O-phospho-L-seryl-[protein] + ADP + H(+). The enzyme catalyses L-threonyl-[protein] + ATP = O-phospho-L-threonyl-[protein] + ADP + H(+). It carries out the reaction [DNA-directed RNA polymerase] + ATP = phospho-[DNA-directed RNA polymerase] + ADP + H(+). Phosphorylation at Thr-14 or Tyr-15 inactivates the enzyme, while phosphorylation at Thr-161 activates it. Plays a key role in the control of the eukaryotic cell cycle by modulating the centrosome cycle as well as mitotic onset; promotes G2-M transition via association with multiple interphase cyclins. During G2 and early mitosis, CDC25A/B/C-mediated dephosphorylation activates CDK1/cyclin complexes which phosphorylate several substrates that trigger at least centrosome separation, Golgi dynamics, nuclear envelope breakdown and chromosome condensation. Once chromosomes are condensed and aligned at the metaphase plate, CDK1 activity is switched off by WEE1- and PKMYT1-mediated phosphorylation to allow sister chromatid separation, chromosome decondensation, reformation of the nuclear envelope and cytokinesis. Catalyzes lamin (LMNA, LMNB1 and LMNB2) phosphorylation at the onset of mitosis, promoting nuclear envelope breakdown. This chain is Cyclin-dependent kinase 1 (cdk1), found in Oryzias latipes (Japanese rice fish).